Here is a 39-residue protein sequence, read N- to C-terminus: Cytochrome b559 subunit beta (39 aa).

Residues 14–30 traverse the membrane as a helical segment; that stretch reads WLAVHGLAVPTVFFLGA. His18 is a heme binding site.

This sequence belongs to the PsbE/PsbF family. In terms of assembly, heterodimer of an alpha subunit and a beta subunit. PSII is composed of 1 copy each of membrane proteins PsbA, PsbB, PsbC, PsbD, PsbE, PsbF, PsbH, PsbI, PsbJ, PsbK, PsbL, PsbM, PsbT, PsbX, PsbY, PsbZ, Psb30/Ycf12, at least 3 peripheral proteins of the oxygen-evolving complex and a large number of cofactors. It forms dimeric complexes. Requires heme b as cofactor.

The protein resides in the plastid. It is found in the chloroplast thylakoid membrane. This b-type cytochrome is tightly associated with the reaction center of photosystem II (PSII). PSII is a light-driven water:plastoquinone oxidoreductase that uses light energy to abstract electrons from H(2)O, generating O(2) and a proton gradient subsequently used for ATP formation. It consists of a core antenna complex that captures photons, and an electron transfer chain that converts photonic excitation into a charge separation. In Physcomitrium patens (Spreading-leaved earth moss), this protein is Cytochrome b559 subunit beta.